The primary structure comprises 770 residues: Integrin beta-2 (770 aa).

The first 22 residues, 1–22, serve as a signal peptide directing secretion; it reads MLPQRPQLLLLAGLLSLQSVLS. Pyrrolidone carboxylic acid is present on Gln-23. At 23–701 the chain is on the extracellular side; sequence QECTKYKVST…DMLECVKGPN (679 aa). The PSI domain occupies 24–74; sequence ECTKYKVSTCRDCIESGPSCAWCQKLNFTGQGEPDSTRCDTRAQLLSKGCP. Cystine bridges form between Cys-25–Cys-43, Cys-33–Cys-447, Cys-36–Cys-62, Cys-46–Cys-73, Cys-191–Cys-198, Cys-246–Cys-286, Cys-386–Cys-400, Cys-420–Cys-445, Cys-449–Cys-467, Cys-459–Cys-470, Cys-472–Cys-481, Cys-483–Cys-514, Cys-497–Cys-512, Cys-506–Cys-517, Cys-519–Cys-534, Cys-536–Cys-559, Cys-541–Cys-557, Cys-549–Cys-562, Cys-564–Cys-573, Cys-575–Cys-598, Cys-582–Cys-596, Cys-590–Cys-601, Cys-603–Cys-612, Cys-615–Cys-618, Cys-622–Cys-663, Cys-628–Cys-647, Cys-631–Cys-643, and Cys-671–Cys-696. 2 N-linked (GlcNAc...) asparagine glycosylation sites follow: Asn-50 and Asn-116. One can recognise a VWFA domain in the interval 124-363; it reads GYPIDLYYLM…ELIKSAYNKL (240 aa). Mg(2+) is bound by residues Ser-136 and Ser-138. Ser-138, Asp-141, Asp-142, and Asp-173 together coordinate Ca(2+). 4 residues coordinate Ca(2+): Asn-229, Asp-231, Pro-233, and Glu-234. Glu-234 is a Mg(2+) binding site. N-linked (GlcNAc...) asparagine glycosylation is present at Asn-254. Ca(2+) contacts are provided by Asp-264 and Glu-347. A Cell attachment site motif is present at residues 397 to 399; that stretch reads RGD. I-EGF domains follow at residues 449–482, 483–535, 536–574, and 575–613; these read CREA…KNCE, CQTH…QFCE, CDNV…SACQ, and CLKS…PLCI. The N-linked (GlcNAc...) asparagine glycan is linked to Asn-501. N-linked (GlcNAc...) asparagine glycosylation is present at Asn-642. A helical membrane pass occupies residues 702–724; sequence IAAIVGGTVGGVVLVGILLLAIW. At 725 to 770 the chain is on the cytoplasmic side; it reads KALTHLSDLREYHRFEKEKLKSQWNNDNPLFKSATTTVMNPKFAES. Phosphoserine occurs at positions 746 and 757. Phosphothreonine is present on residues Thr-759 and Thr-761.

This sequence belongs to the integrin beta chain family. As to quaternary structure, heterodimer of an alpha and a beta subunit. The ITGB2 beta subunit associates with the ITGAL, ITGAM, ITGAX or ITGAD alpha subunits. Found in a complex with CD177 and ITGAM/CD11b. Interacts with FGR. Interacts with COPS5 and RANBP9. Interacts with FLNA (via filamin repeats 4, 9, 12, 17, 19, 21, and 23). Interacts with THBD. Post-translationally, both Ser-746 and Ser-757 become phosphorylated when T-cells are exposed to phorbol esters. Phosphorylation on Thr-759 (but not on Ser-757) allows interaction with 14-3-3 proteins.

It is found in the cell membrane. Its subcellular location is the membrane raft. In terms of biological role, integrin ITGAL/ITGB2 is a receptor for ICAM1, ICAM2, ICAM3 and ICAM4. Integrin ITGAL/ITGB2 is also a receptor for the secreted form of ubiquitin-like protein ISG15; the interaction is mediated by ITGAL. Integrins ITGAM/ITGB2 and ITGAX/ITGB2 are receptors for the iC3b fragment of the third complement component and for fibrinogen. Integrin ITGAX/ITGB2 recognizes the sequence G-P-R in fibrinogen alpha-chain. Integrin ITGAM/ITGB2 recognizes P1 and P2 peptides of fibrinogen gamma chain. Integrin ITGAM/ITGB2 is also a receptor for factor X. Integrin ITGAD/ITGB2 is a receptor for ICAM3 and VCAM1. Contributes to natural killer cell cytotoxicity. Involved in leukocyte adhesion and transmigration of leukocytes including T-cells and neutrophils. Triggers neutrophil transmigration during lung injury through PTK2B/PYK2-mediated activation. Integrin ITGAL/ITGB2 in association with ICAM3, contributes to apoptotic neutrophil phagocytosis by macrophages. In association with alpha subunit ITGAM/CD11b, required for CD177-PRTN3-mediated activation of TNF primed neutrophils. The chain is Integrin beta-2 (ITGB2) from Ovis canadensis (Bighorn sheep).